The following is a 139-amino-acid chain: MNKLKVSQNNYLQRSDFYKFERNGTEWEYIFASNSACLDYNNNTAVNNDIISSLNYCISDDRYYETAAMCVVLKLSQDCSFDVRLQRSGNGPYKNIWDMPCGELQQHIGYKNGICYNSENTVLSAVGVEHRYHKSVSRL.

This is an uncharacterized protein from Saccharomyces cerevisiae (strain ATCC 204508 / S288c) (Baker's yeast).